We begin with the raw amino-acid sequence, 394 residues long: Elongation factor Tu (394 aa).

The tr-type G domain maps to 10–204 (KEHANIGTIG…AVDTYIPTPE (195 aa)). Residues 19-26 (GHVDHGKT) form a G1 region. Residue 19–26 (GHVDHGKT) participates in GTP binding. Threonine 26 lines the Mg(2+) pocket. The segment at 60–64 (GITIN) is G2. A G3 region spans residues 81 to 84 (DCPG). GTP contacts are provided by residues 81-85 (DCPGH) and 136-139 (NKVD). Positions 136–139 (NKVD) are G4. A G5 region spans residues 174 to 176 (SAL).

The protein belongs to the TRAFAC class translation factor GTPase superfamily. Classic translation factor GTPase family. EF-Tu/EF-1A subfamily. Monomer.

The protein resides in the cytoplasm. It catalyses the reaction GTP + H2O = GDP + phosphate + H(+). In terms of biological role, GTP hydrolase that promotes the GTP-dependent binding of aminoacyl-tRNA to the A-site of ribosomes during protein biosynthesis. This Staphylococcus aureus (strain COL) protein is Elongation factor Tu.